We begin with the raw amino-acid sequence, 324 residues long: Acetyl-coenzyme A carboxylase carboxyl transferase subunit alpha (324 aa).

In terms of domain architecture, CoA carboxyltransferase C-terminal spans 37-291 (ILEEKLENLE…DLMIRKTFEQ (255 aa)).

Belongs to the AccA family. In terms of assembly, acetyl-CoA carboxylase is a heterohexamer composed of biotin carboxyl carrier protein (AccB), biotin carboxylase (AccC) and two subunits each of ACCase subunit alpha (AccA) and ACCase subunit beta (AccD).

Its subcellular location is the cytoplasm. It carries out the reaction N(6)-carboxybiotinyl-L-lysyl-[protein] + acetyl-CoA = N(6)-biotinyl-L-lysyl-[protein] + malonyl-CoA. Its pathway is lipid metabolism; malonyl-CoA biosynthesis; malonyl-CoA from acetyl-CoA: step 1/1. Its function is as follows. Component of the acetyl coenzyme A carboxylase (ACC) complex. First, biotin carboxylase catalyzes the carboxylation of biotin on its carrier protein (BCCP) and then the CO(2) group is transferred by the carboxyltransferase to acetyl-CoA to form malonyl-CoA. This chain is Acetyl-coenzyme A carboxylase carboxyl transferase subunit alpha, found in Bacillus cereus (strain B4264).